Here is a 216-residue protein sequence, read N- to C-terminus: Orotate phosphoribosyltransferase (216 aa).

5-phospho-alpha-D-ribose 1-diphosphate contacts are provided by residues Arg-101, Lys-105, His-107, and 127-135 (EDLISTGGS). Ser-131 contributes to the orotate binding site.

This sequence belongs to the purine/pyrimidine phosphoribosyltransferase family. PyrE subfamily. As to quaternary structure, homodimer. Mg(2+) serves as cofactor.

It carries out the reaction orotidine 5'-phosphate + diphosphate = orotate + 5-phospho-alpha-D-ribose 1-diphosphate. The protein operates within pyrimidine metabolism; UMP biosynthesis via de novo pathway; UMP from orotate: step 1/2. Functionally, catalyzes the transfer of a ribosyl phosphate group from 5-phosphoribose 1-diphosphate to orotate, leading to the formation of orotidine monophosphate (OMP). The polypeptide is Orotate phosphoribosyltransferase (Cutibacterium acnes (strain DSM 16379 / KPA171202) (Propionibacterium acnes)).